Here is a 105-residue protein sequence, read N- to C-terminus: Small ribosomal subunit protein uS10 (105 aa).

It belongs to the universal ribosomal protein uS10 family. As to quaternary structure, part of the 30S ribosomal subunit.

Involved in the binding of tRNA to the ribosomes. The protein is Small ribosomal subunit protein uS10 of Gloeothece citriformis (strain PCC 7424) (Cyanothece sp. (strain PCC 7424)).